The sequence spans 202 residues: Small ribosomal subunit protein uS4 (202 aa).

In terms of domain architecture, S4 RNA-binding spans 90 to 152 (MRLDNTVFRL…ERSRRLVETN (63 aa)).

It belongs to the universal ribosomal protein uS4 family. In terms of assembly, part of the 30S ribosomal subunit. Contacts protein S5. The interaction surface between S4 and S5 is involved in control of translational fidelity.

Functionally, one of the primary rRNA binding proteins, it binds directly to 16S rRNA where it nucleates assembly of the body of the 30S subunit. Its function is as follows. With S5 and S12 plays an important role in translational accuracy. The polypeptide is Small ribosomal subunit protein uS4 (Thermosynechococcus vestitus (strain NIES-2133 / IAM M-273 / BP-1)).